The primary structure comprises 347 residues: GMP reductase (347 aa).

An NADP(+)-binding site is contributed by Asp108 to Ala131. K(+) contacts are provided by Gly181 and Gly183. Cys186 acts as the Thioimidate intermediate in catalysis. Residue Ile216–Val239 participates in NADP(+) binding.

It belongs to the IMPDH/GMPR family. GuaC type 1 subfamily. In terms of assembly, homotetramer.

It carries out the reaction IMP + NH4(+) + NADP(+) = GMP + NADPH + 2 H(+). Catalyzes the irreversible NADPH-dependent deamination of GMP to IMP. It functions in the conversion of nucleobase, nucleoside and nucleotide derivatives of G to A nucleotides, and in maintaining the intracellular balance of A and G nucleotides. In Aeromonas salmonicida (strain A449), this protein is GMP reductase.